The chain runs to 890 residues: Receptor like protein 23 (890 aa).

Residues 1-22 form the signal peptide; the sequence is MSKALLHLHFLSLFLLCCVCHS. Residues 23 to 850 are Extracellular-facing; sequence SIFTLNFHFT…EEEEEVLNGR (828 aa). N-linked (GlcNAc...) asparagine glycans are attached at residues N58, N70, N91, N109, and N145. LRR repeat units follow at residues 97–121, 123–145, 146–171, 173–195, 196–218, 220–243, 244–268, 270–290, 291–316, 318–339, 340–363, 364–389, 391–411, 412–436, 438–461, 462–485, 487–506, 507–527, 528–551, 553–575, 577–598, 599–623, 626–650, 699–724, 726–747, 748–771, and 773–796; these read FHQL…GFGN, KRLE…SFSN, LTML…GLRK, IVLD…LFEL, HQLR…KFGN, HRLE…ISNL, TRLT…NLTN, YELD…LLTL, PFLA…STSS, LEIM…ISKL, INLK…LFSS, LKSL…SYIP, TLEM…ILKT, LKEL…LWSL, LLQS…ILVN, SSVL…PLSI, GFGV…ICNR, SSLA…PPCL, RNLE…LCDG, SLRT…FVNC, SLKF…WLKA, LPNL…HQGP, FPEL…YFVN, LTSY…GLLK, LIAV…MANL, ENLE…LGSI, and FLAY…QITG. N189, N207, N242, and N265 each carry an N-linked (GlcNAc...) asparagine glycan. Residue N311 is glycosylated (N-linked (GlcNAc...) asparagine). N-linked (GlcNAc...) asparagine glycosylation is present at N351. Residue N461 is glycosylated (N-linked (GlcNAc...) asparagine). N-linked (GlcNAc...) asparagine glycosylation is found at N505 and N518. An N-linked (GlcNAc...) asparagine glycan is attached at N574. N730 carries N-linked (GlcNAc...) asparagine glycosylation. The N-linked (GlcNAc...) asparagine glycan is linked to N778. The chain crosses the membrane as a helical span at residues 851–871; the sequence is AVAIGYGSGLLLGLAIAQVIA. At 872-890 the chain is on the cytoplasmic side; the sequence is SYKPEWLVKIIGLNKRRKR.

The protein belongs to the RLP family. As to quaternary structure, directly interacts with a 20-mer fragment (nlp20) from NLPs through its extracellular LRR domain. Component of a trimeric complex composed of RLP23, SOBIR1 and BAK1. BAK1 is recruited into a pre-formed RLP23-SOBIR1 complex in a ligand-dependent manner. Interacts with SOBIR1.

It is found in the cell membrane. Functionally, involved in the perception of necrosis and ethylene-inducing peptide 1-like proteins (NLPs), that act as extracellular signals mediating immune activation. Component of the RLP23-SOBIR1-BAK1 complex that mediates NLP-triggered immunity. In Arabidopsis thaliana (Mouse-ear cress), this protein is Receptor like protein 23.